Consider the following 98-residue polypeptide: MNEKGFTLVEMLIVLFIISILLLITIPNVTKHNQTIQKKGCEGLQNMVKAQMTAFELDHEGQTPSLADLQSEGYVKKDAVCPNGKRIIITGGEVKVEH.

Positions 1–5 (MNEKG) are excised as a propeptide. The may be involved in polymerization of ComGC stretch occupies residues 4–29 (KGFTLVEMLIVLFIISILLLITIPNV). Phe6 carries the post-translational modification N-methylphenylalanine. Residues 6 to 26 (FTLVEMLIVLFIISILLLITI) form a helical membrane-spanning segment. A disulfide bridge links Cys41 with Cys81.

This sequence belongs to the ComGC family. As to quaternary structure, the transformation pili are flexible filaments, consisting mainly of the major pilin ComGC and smaller amounts of the minor pilins, including at least ComGD, ComGF and ComGG. Homodimer. Forms higher-order multimers. Interacts with ComGG; the interaction is probably direct. Post-translationally, processing of ComGC in competent cells requires ComC, while stabilization, possibly by formation of a disulfide bond, requires BdbC and BdbD.

The protein localises to the cell membrane. It is found in the cell surface. It localises to the fimbrium. Functionally, major component of the type IV-like pilus (T4P) that plays a role in transformation. Transformation pili are dynamically extended and retracted, perhaps thereby promoting DNA uptake and transformation. Required for transformation and DNA binding. This Bacillus subtilis (strain 168) protein is Competence protein ComGC (comGC).